We begin with the raw amino-acid sequence, 595 residues long: Cyclin-dependent kinase-like 3 (595 aa).

Residues 4–286 form the Protein kinase domain; it reads YETLGKVGEG…STDLLRHDYF (283 aa). ATP is bound by residues 10–18 and lysine 33; that span reads VGEGSYGTV. The [NKR]KIAxRE motif lies at 45–51; sequence KIATREI. Aspartate 125 serves as the catalytic Proton acceptor. A Phosphothreonine modification is found at threonine 158. Tyrosine 160 bears the Phosphotyrosine mark. Disordered stretches follow at residues 362–427, 448–513, and 551–586; these read VIKA…PHAG, SSNL…NKRK, and RESK…GKNL. Residues 368 to 386 show a composition bias toward basic and acidic residues; that stretch reads GKGDVPDQKKPEYEGDHRQ. Polar residues predominate over residues 387-397; the sequence is QGTADDTQPSS. Residues 448–457 show a composition bias toward low complexity; sequence SSNLSHPNSR. Composition is skewed to polar residues over residues 468 to 491 and 499 to 509; these read SSQT…QVQT and RTGQNDQISSG. Positions 570-585 are enriched in basic and acidic residues; sequence NQEKQEGGDGDCEGKN.

Belongs to the protein kinase superfamily. CMGC Ser/Thr protein kinase family. CDC2/CDKX subfamily.

The protein resides in the cytoplasm. It catalyses the reaction L-seryl-[protein] + ATP = O-phospho-L-seryl-[protein] + ADP + H(+). The enzyme catalyses L-threonyl-[protein] + ATP = O-phospho-L-threonyl-[protein] + ADP + H(+). This Mus musculus (Mouse) protein is Cyclin-dependent kinase-like 3.